The following is a 423-amino-acid chain: Polyglutamylase complex subunit TTLL1 (423 aa).

Residues 1 to 367 enclose the TTL domain; it reads MAGKVKWVTD…NGEIPDCKWN (367 aa). ATP-binding positions include Lys138, 144–145, 181–184, and 194–196; these read QG, SLYI, and KFD. Gln144 contributes to the a protein binding site. L-glutamate is bound at residue Arg220. Position 241-242 (241-242) interacts with ATP; it reads TN. Residue Lys259 participates in L-glutamate binding. 3 residues coordinate Mg(2+): Asp313, Glu326, and Asn328. Lys344 contributes to the L-glutamate binding site. The disordered stretch occupies residues 391–423; it reads GADRELRSRQGQSLGPRAGRSRDSGRAVLTTWK.

Belongs to the tubulin polyglutamylase family. In terms of assembly, part of the neuronal tubulin polyglutamylase complex which contains TPGS1, TPGS2, TTLL1, LRRC49 and NICN1. Interacts with PCM1, CSTPP1 and LRRC49. Requires Mg(2+) as cofactor. In terms of tissue distribution, expressed in a wide range of tissues. Has a stronger expression in heart, brain and testis.

Its subcellular location is the cytoplasm. The protein localises to the cytoskeleton. It localises to the cilium basal body. The protein resides in the cilium axoneme. It is found in the cell projection. Its subcellular location is the cilium. The protein localises to the flagellum. It catalyses the reaction (L-glutamyl)(n)-gamma-L-glutamyl-L-glutamyl-[protein] + L-glutamate + ATP = (L-glutamyl)(n+1)-gamma-L-glutamyl-L-glutamyl-[protein] + ADP + phosphate + H(+). Its function is as follows. Catalytic subunit of a polyglutamylase complex which modifies tubulin, generating side chains of glutamate on the gamma-carboxyl group of specific glutamate residues within the C-terminal tail of tubulin. Probably involved in the side-chain elongation step of the polyglutamylation reaction rather than the initiation step. Modifies both alpha- and beta-tubulins with a preference for the alpha-tail. Unlike most polyglutamylases of the tubulin--tyrosine ligase family, only displays a catalytic activity when in complex with other proteins as it is most likely lacking domains important for autonomous activity. Part of the neuronal tubulin polyglutamylase complex. Mediates cilia and flagella polyglutamylation which is essential for their biogenesis and motility. Involved in respiratory motile cilia function through the regulation of beating asymmetry. Essential for sperm flagella biogenesis, motility and male fertility. Involved in KLF4 glutamylation which impedes its ubiquitination, thereby leading to somatic cell reprogramming, pluripotency maintenance and embryogenesis. The protein is Polyglutamylase complex subunit TTLL1 of Homo sapiens (Human).